The following is a 125-amino-acid chain: Fluoride-specific ion channel FluC (125 aa).

The next 4 membrane-spanning stretches (helical) occupy residues 5–25 (ILAICMGASVGALARWGLALW), 37–57 (LAANLVGGYLVGVAIASFHLL), 71–91 (GFLGGLTTFSSFSAEVVTMLL), and 97–117 (VALLTAAAHLGGSLFLTWLGI). The Na(+) site is built by Gly74 and Thr77.

It belongs to the fluoride channel Fluc/FEX (TC 1.A.43) family.

Its subcellular location is the cell inner membrane. The catalysed reaction is fluoride(in) = fluoride(out). With respect to regulation, na(+) is not transported, but it plays an essential structural role and its presence is essential for fluoride channel function. Functionally, fluoride-specific ion channel. Important for reducing fluoride concentration in the cell, thus reducing its toxicity. This Variovorax paradoxus (strain S110) protein is Fluoride-specific ion channel FluC.